The primary structure comprises 183 residues: Probable apo-citrate lyase phosphoribosyl-dephospho-CoA transferase (183 aa).

Belongs to the CitX family.

The catalysed reaction is apo-[citrate lyase ACP] + 2'-(5''-triphospho-alpha-D-ribosyl)-3'-dephospho-CoA = holo-[citrate lyase ACP] + diphosphate. Functionally, transfers 2-(5''-triphosphoribosyl)-3'-dephosphocoenzyme-A on a serine residue to the apo-acyl carrier protein (gamma chain) of the citrate lyase to yield holo-acyl carrier protein. This chain is Probable apo-citrate lyase phosphoribosyl-dephospho-CoA transferase, found in Escherichia coli (strain 55989 / EAEC).